We begin with the raw amino-acid sequence, 122 residues long: WUSCHEL-related homeobox 7 (122 aa).

Residues 25–89 (AKCGRWNPTV…NHKARERQKC (65 aa)) constitute a DNA-binding region (homeobox; WUS-type). A compositionally biased stretch (basic and acidic residues) spans 98–111 (DHRQDTDLSKPRRD). The disordered stretch occupies residues 98 to 122 (DHRQDTDLSKPRRDNVRRHQLPAKG). Basic residues predominate over residues 112-122 (NVRRHQLPAKG).

Belongs to the WUS homeobox family.

It is found in the nucleus. In terms of biological role, potential transcription factor that plays a central role during developmental processes. The sequence is that of WUSCHEL-related homeobox 7 (WOX7) from Arabidopsis thaliana (Mouse-ear cress).